Consider the following 154-residue polypeptide: Superoxide dismutase [Cu-Zn] (154 aa).

Residues His47, His49, and His64 each coordinate Cu cation. An intrachain disulfide couples Cys58 to Cys147. Zn(2+) contacts are provided by His64, His72, His81, and Asp84. His121 contacts Cu cation. Arg144 is a substrate binding site.

It belongs to the Cu-Zn superoxide dismutase family. Homodimer. Cu cation is required as a cofactor. Requires Zn(2+) as cofactor.

The protein resides in the cytoplasm. It catalyses the reaction 2 superoxide + 2 H(+) = H2O2 + O2. Destroys radicals which are normally produced within the cells and which are toxic to biological systems. The polypeptide is Superoxide dismutase [Cu-Zn] (SOD1) (Candida albicans (Yeast)).